Here is a 148-residue protein sequence, read N- to C-terminus: Large ribosomal subunit protein uL15 (148 aa).

The segment at 1–57 (MRLHDLYPFPEERKTRKRVGRGSGSGLGCTSGKGNKGQNARAGGGVRPGFEGGQMPL) is disordered. Gly residues-rich tracts occupy residues 21–35 (RGSG…GKGN) and 42–52 (AGGGVRPGFEG).

It belongs to the universal ribosomal protein uL15 family. Part of the 50S ribosomal subunit.

Functionally, binds to the 23S rRNA. The polypeptide is Large ribosomal subunit protein uL15 (Nitratidesulfovibrio vulgaris (strain ATCC 29579 / DSM 644 / CCUG 34227 / NCIMB 8303 / VKM B-1760 / Hildenborough) (Desulfovibrio vulgaris)).